The chain runs to 300 residues: 4-diphosphocytidyl-2-C-methyl-D-erythritol kinase (300 aa).

K22 is an active-site residue. ATP is bound at residue 105-115 (PMGGGLGGGSS). D147 is a catalytic residue.

This sequence belongs to the GHMP kinase family. IspE subfamily.

It catalyses the reaction 4-CDP-2-C-methyl-D-erythritol + ATP = 4-CDP-2-C-methyl-D-erythritol 2-phosphate + ADP + H(+). Its pathway is isoprenoid biosynthesis; isopentenyl diphosphate biosynthesis via DXP pathway; isopentenyl diphosphate from 1-deoxy-D-xylulose 5-phosphate: step 3/6. Catalyzes the phosphorylation of the position 2 hydroxy group of 4-diphosphocytidyl-2C-methyl-D-erythritol. The sequence is that of 4-diphosphocytidyl-2-C-methyl-D-erythritol kinase from Colwellia psychrerythraea (strain 34H / ATCC BAA-681) (Vibrio psychroerythus).